The following is a 919-amino-acid chain: Glutamate receptor ionotropic, kainate 3 (919 aa).

A signal peptide spans 1-31 (MTAPWRRLRSLVWEYWAGLLVCAFWIPDSRG). At 32–563 (MPHVIRIGGI…VFSFLNPLSP (532 aa)) the chain is on the extracellular side. Residues N70, N76, N278, N381, N415, N426, and N433 are each glycosylated (N-linked (GlcNAc...) asparagine). C99 and C350 are disulfide-bonded. The L-glutamate site is built by P518, T520, and R525. N-linked (GlcNAc...) asparagine glycans are attached at residues N548 and N551. A helical membrane pass occupies residues 564–584 (DIWMYVLLAYLGVSCVLFVIA). At 585–636 (RFSPYEWYDAHPCNPGSEVVENNFTLLNSFWFGMGSLMQQGSELMPKALSTR) the chain is on the cytoplasmic side. Residues 637 to 657 (IIGGIWWFFTLIIISSYTANL) traverse the membrane as a helical segment. Residues 658-820 (AAFLTVERME…KEASALGIQK (163 aa)) are Extracellular-facing. 3 residues coordinate L-glutamate: A691, T692, and E739. N-linked (GlcNAc...) asparagine glycosylation is present at N752. A helical transmembrane segment spans residues 821–841 (IGGIFIVLAAGLVLSVLVAVG). Topologically, residues 842 to 919 (EFVYKLRKTA…CSTSLAPVFP (78 aa)) are cytoplasmic. A Phosphoserine modification is found at S869. K887 participates in a covalent cross-link: Glycyl lysine isopeptide (Lys-Gly) (interchain with G-Cter in SUMO1).

This sequence belongs to the glutamate-gated ion channel (TC 1.A.10.1) family. GRIK3 subfamily. In terms of assembly, homotetramer, and heterotetramer with either GRIK4 or GRIK5. Can form functional heteromeric receptors with GRIK2. Interacts with PRKCABP. Interacts with NETO2.

It localises to the cell membrane. The protein localises to the postsynaptic cell membrane. It catalyses the reaction Ca(2+)(in) = Ca(2+)(out). In terms of biological role, ionotropic glutamate receptor that functions as a cation-permeable ligand-gated ion channel, gated by L-glutamate and the glutamatergic agonist kainic acid. Binding of the excitatory neurotransmitter L-glutamate induces a conformation change, leading to the opening of the cation channel, and thereby converts the chemical signal to an electrical impulse. The receptor then desensitizes rapidly and enters a transient inactive state, characterized by the presence of bound agonist. In association with GRIK2, involved in presynaptic facilitation of glutamate release at hippocampal mossy fiber synapses. The protein is Glutamate receptor ionotropic, kainate 3 (GRIK3) of Macaca fascicularis (Crab-eating macaque).